We begin with the raw amino-acid sequence, 128 residues long: Pi-hexatoxin-Hi1c (128 aa).

An N-terminal signal peptide occupies residues 1–19 (MKLRITLALTSVLAFCVFG). The propeptide occupies 20-47 (DKENENLMENLLEDDLLDIFTDAIHMER). Intrachain disulfides connect C54–C69, C61–C74, C68–C84, C93–C108, C100–C113, and C107–C124. Domain repeat units lie at residues 54-84 (CIAK…HEVC) and 93-124 (CLEK…HPVC). Residues 54–124 (CIAKWKSCAG…ERRGNKHPVC (71 aa)) are 2 X approximate repeats with cysteine pattern C-C-CC-C-C.

The protein belongs to the psalmotoxin-1 family. Double-knot toxin subfamily. In terms of tissue distribution, expressed by the venom gland.

Its subcellular location is the secreted. Functionally, this toxin potently and selectively inhibits ASIC1a, an isoform of the gene ASIC1. It incompletely inhibits ASIC1a activation in a pH-independent and slowly reversible manner. This toxin acts by binding to and stabilizing the closed state of the channel, thereby impeding the transition into a conducting state. This toxin may bind to the acidic pocket of ASIC1a, since mutation of a key residue of this pocket (Arg-350) abolishes the ability of the toxin to inhibit ASIC1a. In vivo, this toxin protects the brain from neuronal injury when administered up to 8 hours after stroke onset. The protein is Pi-hexatoxin-Hi1c of Hadronyche infensa (Fraser island funnel-web spider).